The sequence spans 467 residues: Asparagine--tRNA ligase (467 aa).

The protein belongs to the class-II aminoacyl-tRNA synthetase family. In terms of assembly, homodimer.

Its subcellular location is the cytoplasm. It carries out the reaction tRNA(Asn) + L-asparagine + ATP = L-asparaginyl-tRNA(Asn) + AMP + diphosphate + H(+). This Protochlamydia amoebophila (strain UWE25) protein is Asparagine--tRNA ligase.